A 608-amino-acid polypeptide reads, in one-letter code: X-ray repair cross-complementing protein 6 (608 aa).

Residues 1–11 (MSEWESYYKTE) show a composition bias toward basic and acidic residues. Residues 1-29 (MSEWESYYKTEGEEEEEEEESPDTGGEYK) are disordered. S2 is modified (N-acetylserine). A Phosphoserine modification is found at S2. A Phosphoserine; by PRKDC modification is found at S6. Positions 12–22 (GEEEEEEEESP) are enriched in acidic residues. K29 serves as the catalytic Schiff-base intermediate with DNA; for 5'-deoxyribose-5-phosphate lyase activity. N6-acetyllysine is present on K29. A Phosphoserine; by PRKDC modification is found at S49. One can recognise a Ku domain in the interval 259–466 (FKLGEDVVLM…IDKMKAIVQK (208 aa)). Positions 275 to 339 (VQKANKPFPV…EETEELKRFD (65 aa)) are DNA-binding. K315 participates in a covalent cross-link: Glycyl lysine isopeptide (Lys-Gly) (interchain with G-Cter in SUMO2). 3 positions are modified to N6-acetyllysine: K329, K336, and K459. The tract at residues 371-480 (SLVSGSSTLF…YRSDSFENPV (110 aa)) is interaction with XRCC5. A phosphoserine mark is found at S475, S518, and S548. The tract at residues 534 to 557 (PEGKVAKRKQDDEGSTSKKPKVEL) is disordered. The span at 537 to 557 (KVAKRKQDDEGSTSKKPKVEL) shows a compositional bias: basic and acidic residues. The interval 548–607 (STSKKPKVELSEEELKAHFRKGTLGKLTVPTLKDICKAHGLKSGPKKQELLDALIRHLEK) is interaction with DEAF1. K554 participates in a covalent cross-link: Glycyl lysine isopeptide (Lys-Gly) (interchain with G-Cter in SUMO2). The residue at position 558 (S558) is a Phosphoserine. At K568 the chain carries N6,N6,N6-trimethyllysine. Residues 571–605 (LGKLTVPTLKDICKAHGLKSGPKKQELLDALIRHL) enclose the SAP domain. The interval 576-581 (VPTLKD) is interaction with BAX.

This sequence belongs to the ku70 family. As to quaternary structure, heterodimer composed of XRCC5/Ku80 and XRCC6/Ku70. Component of the core long-range non-homologous end joining (NHEJ) complex (also named DNA-PK complex) composed of PRKDC, LIG4, XRCC4, XRCC6/Ku70, XRCC5/Ku86 and NHEJ1/XLF. Additional component of the NHEJ complex includes PAXX. Following autophosphorylation, PRKDC dissociates from DNA, leading to formation of the short-range NHEJ complex, composed of LIG4, XRCC4, XRCC6/Ku70, XRCC5/Ku86 and NHEJ1/XLF. The XRCC5-XRCC6 dimer also associates with NAA15, and this complex binds to the osteocalcin promoter and activates osteocalcin expression. In addition, XRCC6 interacts with the osteoblast-specific transcription factors MSX2, RUNX2 and DLX5. Interacts with ELF3. Interacts with ATP23. The XRCC5-XRRC6 dimer associates in a DNA-dependent manner with APEX1. Binds to CDK9. Identified in a complex with DEAF1 and XRCC5. Interacts with DEAF1 (via the SAND domain); the interaction is direct and may be inhibited by DNA-binding. Interacts with CLU. Interacts with NR4A3; the DNA-dependent protein kinase complex DNA-PK phosphorylates and activates NR4A3 and prevents NR4A3 ubiquitinylation and degradation. Interacts with CYREN (via KBM motif). Interacts (via N-terminus) with HSF1 (via N-terminus); this interaction is direct and prevents XRCC5/XRCC6 heterodimeric binding and non-homologous end joining (NHEJ) repair activities induced by ionizing radiation (IR). Part of the HDP-RNP complex composed of at least HEXIM1, PRKDC, XRCC5, XRCC6, paraspeckle proteins (SFPQ, NONO, PSPC1, RBM14, and MATR3) and NEAT1 RNA. Interacts with HMBOX1. Interacts with ATF7. Interacts with APLF (via KBM motif). Interacts with WRN (via KBM motif). The XRCC5-XRCC6 dimer associates with ALKBH2. Interacts with TPRN; TPRN interacts with a number of DNA damage response proteins, is recruited to sites of DNA damage and may play a role in DNA damage repair. When not acetylated, interacts with BAX. Interacts with ERCC6L2. Post-translationally, phosphorylation by PRKDC may enhance helicase activity. Phosphorylation of Ser-49 does not affect DNA repair. ADP-ribosylated by PARP3. In terms of processing, methylation by SETD4 leads to accumulation in the cytoplasm and is a prerequisite for acetylation, possibly due to the change of subcellular from the nucleus to the cytosol initiated by methylation, acetylation occurring in the cytosol. Post-translationally, acetylation can be catalyzed in vitro by CREBBP/CBP and KAT2B/PCAF.

Its subcellular location is the nucleus. It is found in the chromosome. The protein localises to the cytoplasm. In terms of biological role, single-stranded DNA-dependent ATP-dependent helicase that plays a key role in DNA non-homologous end joining (NHEJ) by recruiting DNA-PK to DNA. Required for double-strand break repair and V(D)J recombination. Also has a role in chromosome translocation. Has a role in chromosome translocation. The DNA helicase II complex binds preferentially to fork-like ends of double-stranded DNA in a cell cycle-dependent manner. It works in the 3'-5' direction. During NHEJ, the XRCC5-XRRC6 dimer performs the recognition step: it recognizes and binds to the broken ends of the DNA and protects them from further resection. Binding to DNA may be mediated by XRCC6. The XRCC5-XRRC6 dimer acts as a regulatory subunit of the DNA-dependent protein kinase complex DNA-PK by increasing the affinity of the catalytic subunit PRKDC to DNA by 100-fold. The XRCC5-XRRC6 dimer is probably involved in stabilizing broken DNA ends and bringing them together. The assembly of the DNA-PK complex to DNA ends is required for the NHEJ ligation step. Probably also acts as a 5'-deoxyribose-5-phosphate lyase (5'-dRP lyase), by catalyzing the beta-elimination of the 5' deoxyribose-5-phosphate at an abasic site near double-strand breaks. 5'-dRP lyase activity allows to 'clean' the termini of abasic sites, a class of nucleotide damage commonly associated with strand breaks, before such broken ends can be joined. The XRCC5-XRRC6 dimer together with APEX1 acts as a negative regulator of transcription. In association with NAA15, the XRCC5-XRRC6 dimer binds to the osteocalcin promoter and activates osteocalcin expression. Plays a role in the regulation of DNA virus-mediated innate immune response by assembling into the HDP-RNP complex, a complex that serves as a platform for IRF3 phosphorylation and subsequent innate immune response activation through the cGAS-STING pathway. Negatively regulates apoptosis by interacting with BAX and sequestering it from the mitochondria. Might have deubiquitination activity, acting on BAX. The chain is X-ray repair cross-complementing protein 6 (Xrcc6) from Mus musculus (Mouse).